A 409-amino-acid polypeptide reads, in one-letter code: Serine hydroxymethyltransferase (409 aa).

Residues leucine 116 and 120 to 122 contribute to the (6S)-5,6,7,8-tetrahydrofolate site; that span reads GHL. Residue lysine 225 is modified to N6-(pyridoxal phosphate)lysine.

The protein belongs to the SHMT family. In terms of assembly, homodimer. The cofactor is pyridoxal 5'-phosphate.

The protein resides in the cytoplasm. It carries out the reaction (6R)-5,10-methylene-5,6,7,8-tetrahydrofolate + glycine + H2O = (6S)-5,6,7,8-tetrahydrofolate + L-serine. The protein operates within one-carbon metabolism; tetrahydrofolate interconversion. Its pathway is amino-acid biosynthesis; glycine biosynthesis; glycine from L-serine: step 1/1. In terms of biological role, catalyzes the reversible interconversion of serine and glycine with tetrahydrofolate (THF) serving as the one-carbon carrier. This reaction serves as the major source of one-carbon groups required for the biosynthesis of purines, thymidylate, methionine, and other important biomolecules. Also exhibits THF-independent aldolase activity toward beta-hydroxyamino acids, producing glycine and aldehydes, via a retro-aldol mechanism. The protein is Serine hydroxymethyltransferase of Acholeplasma laidlawii (strain PG-8A).